A 139-amino-acid chain; its full sequence is Heat shock protein homolog C338.06c (139 aa).

Residues 27–139 form the sHSP domain; it reads AWLSCWGPAL…EFTTRIVEIQ (113 aa).

This sequence belongs to the small heat shock protein (HSP20) family.

The protein resides in the mitochondrion. This Schizosaccharomyces pombe (strain 972 / ATCC 24843) (Fission yeast) protein is Heat shock protein homolog C338.06c.